The sequence spans 204 residues: uncharacterized protein (204 aa).

A disordered region spans residues 118–169; that stretch reads FPAASERPMPSRRLSKATQNVQTRPSERPAPCHRRPGPRGPGGRDPPEACHP.

This is an uncharacterized protein from Encephalitozoon cuniculi (strain GB-M1) (Microsporidian parasite).